The primary structure comprises 123 residues: Holo-[acyl-carrier-protein] synthase (123 aa).

Asp-8 and Glu-56 together coordinate Mg(2+).

The protein belongs to the P-Pant transferase superfamily. AcpS family. It depends on Mg(2+) as a cofactor.

It is found in the cytoplasm. It carries out the reaction apo-[ACP] + CoA = holo-[ACP] + adenosine 3',5'-bisphosphate + H(+). Functionally, transfers the 4'-phosphopantetheine moiety from coenzyme A to a Ser of acyl-carrier-protein. The sequence is that of Holo-[acyl-carrier-protein] synthase from Clostridium botulinum (strain Eklund 17B / Type B).